A 457-amino-acid polypeptide reads, in one-letter code: MADLKNLFLITKHPSTTQIFLTSLFFLSLFLLSSSSLSDFSPSLIVSSFTSRLLTAANFFSSPSSYTSSASDTTMFLSSVSPRRINEPKIDSETKELASCDIFDGTWVFDDSEPVYLPGYCPFVEDKFNCFKNGRPDSGFLRHRWQPHGCSIPRFDGKKMLKMLRGKRVVFVGDSLNRNMWESLVCSLRSTLEDKNRVSKIIGKQSNLPNEGFYGFRFNDFECSIDFIKSPFLVQESEVVDVYGKRRETLRLDMIQRSMTKIYKNADIVIFNTGHWWTHQKTYEGKGYYQEGNRVYERLEVKEAYTKAIHTWADWVDSNINSTKTRVFFVGYSSSHFRKGAWNSGGQCDGETRPIQNETYTGVYPWMMKVVESVISEMKTPVFYMNITKMTWYRTDGHPSVYRQPADPRGTSPAAGMYQDCSHWCLPGVPDSWNQLLYATLLVSHGSLPDKSLGSLL.

A helical; Signal-anchor for type II membrane protein transmembrane segment spans residues 19–37 (IFLTSLFFLSLFLLSSSSL). The short motif at 173–175 (GDS) is the GDS motif element. A DCXHWCLPGXXDXWN motif motif is present at residues 420–434 (DCSHWCLPGVPDSWN).

It belongs to the PC-esterase family. TBL subfamily.

Its subcellular location is the membrane. Functionally, may act as a bridging protein that binds pectin and other cell wall polysaccharides. Probably involved in maintaining esterification of pectins. May be involved in the specific O-acetylation of cell wall polymers. The protein is Protein trichome birefringence-like 4 (TBL4) of Arabidopsis thaliana (Mouse-ear cress).